The sequence spans 97 residues: YcgL domain-containing protein PputW619_3899 (97 aa).

Residues 3-87 form the YcgL domain; that stretch reads RICSIYKSPR…AEDEYIEHLP (85 aa).

In Pseudomonas putida (strain W619), this protein is YcgL domain-containing protein PputW619_3899.